A 99-amino-acid chain; its full sequence is MAVNPLDFLKNMTSFKDNIDNLKKEMSQIVVCGRAGSDVIVVEMNGEFLVKKVSIKEEFFSDLDNEALEHMIKSAFNDAISKVKEEIKSKTMGSMPFGI.

The protein belongs to the YbaB/EbfC family. As to quaternary structure, homodimer.

The protein localises to the cytoplasm. It localises to the nucleoid. Binds to DNA and alters its conformation. May be involved in regulation of gene expression, nucleoid organization and DNA protection. The sequence is that of Nucleoid-associated protein EbfC from Borrelia hermsii (strain HS1 / DAH).